The sequence spans 278 residues: Putative non-heme haloperoxidase (278 aa).

The region spanning 24–240 is the AB hydrolase-1 domain; sequence PLVFLHGLSV…STAKITNASF (217 aa). Catalysis depends on residues S97 and D221.

Belongs to the AB hydrolase superfamily.

This chain is Putative non-heme haloperoxidase (59.2), found in Mycobacterium (Mycobacteriophage D29).